A 390-amino-acid chain; its full sequence is 23S rRNA (uracil(747)-C(5))-methyltransferase RlmC (390 aa).

Residues C12, C20, C23, and C100 each coordinate [4Fe-4S] cluster. S-adenosyl-L-methionine is bound by residues Q225, F254, E275, and N322. Catalysis depends on C349, which acts as the Nucleophile.

This sequence belongs to the class I-like SAM-binding methyltransferase superfamily. RNA M5U methyltransferase family. RlmC subfamily.

The catalysed reaction is uridine(747) in 23S rRNA + S-adenosyl-L-methionine = 5-methyluridine(747) in 23S rRNA + S-adenosyl-L-homocysteine + H(+). In terms of biological role, catalyzes the formation of 5-methyl-uridine at position 747 (m5U747) in 23S rRNA. The sequence is that of 23S rRNA (uracil(747)-C(5))-methyltransferase RlmC from Shewanella baltica (strain OS223).